Consider the following 105-residue polypeptide: U-scoloptoxin(16)-Sm4a (105 aa).

Positions 1 to 22 (MWALTVFVTILAAAIPITGVTG) are cleaved as a signal peptide.

The protein belongs to the scoloptoxin-16 family. Post-translationally, contains 4 disulfide bonds. In terms of tissue distribution, expressed by the venom gland.

It localises to the secreted. In Scolopendra morsitans (Tanzanian blue ringleg centipede), this protein is U-scoloptoxin(16)-Sm4a.